A 338-amino-acid polypeptide reads, in one-letter code: 1-aminocyclopropane-1-carboxylate deaminase (338 aa).

The residue at position 51 (Lys51) is an N6-(pyridoxal phosphate)lysine. Residue Ser78 is the Nucleophile of the active site.

Belongs to the ACC deaminase/D-cysteine desulfhydrase family. Homotrimer. It depends on pyridoxal 5'-phosphate as a cofactor.

It catalyses the reaction 1-aminocyclopropane-1-carboxylate + H2O = 2-oxobutanoate + NH4(+). Its function is as follows. Catalyzes a cyclopropane ring-opening reaction, the irreversible conversion of 1-aminocyclopropane-1-carboxylate (ACC) to ammonia and alpha-ketobutyrate. Allows growth on ACC as a nitrogen source. The sequence is that of 1-aminocyclopropane-1-carboxylate deaminase from Variovorax paradoxus (strain S110).